The following is a 134-amino-acid chain: Large ribosomal subunit protein bL20 (134 aa).

It belongs to the bacterial ribosomal protein bL20 family.

Binds directly to 23S ribosomal RNA and is necessary for the in vitro assembly process of the 50S ribosomal subunit. It is not involved in the protein synthesizing functions of that subunit. The polypeptide is Large ribosomal subunit protein bL20 (Rhizobium rhizogenes (strain K84 / ATCC BAA-868) (Agrobacterium radiobacter)).